The following is a 471-amino-acid chain: MGLPTVPGLLLPLVLPALLADVYPAGVQGLVPHPGDLEKRESPCPQGKYNHPQNSTICCTKCHKGTYLYNDCPGPGRDTDCRVCAPGTYTALENHLRRCLSCSRCRDEMFQVEISPCVVDRDTVCGCRKNQYREYWGETGFRCLNCSLCPNGTVNIPCQERQDTICHCHMGFFLKGAKCISCHDCKNKECEKLCPTRPSTGKDSQDPGTTVLLPLVIVFGLCLASFASVVLACRYQRWKPKLYSIICGQSTLVKEGEPELLVPAPGFNPTTTICFSSTPSSSPVSIPPYISCDRSNFGAVASPSSETAPPHLKAGPILPGPPASTHLCTPGPPASTHLCTPGPPASTHLCTPVQKWEASAPSAPDQLADADPATLYAVVDGVPPSRWKELVRRLGLSEHEIERLELENGRHLREAQYSMLAAWRRRTPRREATLELLGRVLRDMDLLGCLENIEEALGGAARLASEPRLLW.

An N-terminal signal peptide occupies residues 1 to 29; sequence MGLPTVPGLLLPLVLPALLADVYPAGVQG. Residues 30–210 lie on the Extracellular side of the membrane; the sequence is LVPHPGDLEK…GKDSQDPGTT (181 aa). TNFR-Cys repeat units lie at residues 43–82, 83–125, 126–166, and 167–195; these read PCPQGKYNHPQNSTICCTKCHKGTYLYNDCPGPGRDTDCR, VCAP…DTVC, GCRK…DTIC, and HCHMGFFLKGAKCISCHDCKNKECEKLCP. Disulfide bonds link Cys-44–Cys-58, Cys-59–Cys-72, Cys-62–Cys-81, Cys-84–Cys-99, Cys-102–Cys-117, Cys-105–Cys-125, and Cys-127–Cys-143. An N-linked (GlcNAc...) asparagine glycan is attached at Asn-54. Asn-145 and Asn-151 each carry an N-linked (GlcNAc...) asparagine glycan. 5 disulfide bridges follow: Cys-146-Cys-158, Cys-149-Cys-166, Cys-168-Cys-179, Cys-182-Cys-194, and Cys-185-Cys-190. The helical transmembrane segment at 211 to 233 threads the bilayer; sequence VLLPLVIVFGLCLASFASVVLAC. At 234–471 the chain is on the cytoplasmic side; that stretch reads RYQRWKPKLY…RLASEPRLLW (238 aa). The N-SMase activation domain (NSD) stretch occupies residues 340 to 360; the sequence is TPGPPASTHLCTPVQKWEASA. Residues 372–457 enclose the Death domain; the sequence is PATLYAVVDG…GCLENIEEAL (86 aa).

In terms of assembly, binding of TNF to the extracellular domain leads to homotrimerization. The aggregated death domains provide a novel molecular interface that interacts specifically with the death domain of TRADD. Various TRADD-interacting proteins such as TRAFS, RIPK1 and possibly FADD, are recruited to the complex by their association with TRADD. This complex activates at least two distinct signaling cascades, apoptosis and NF-kappa-B signaling. Interacts with BAG4, BABAM2, FEM1B, GRB2, SQSTM1 and TRPC4AP. Interacts directly with NOL3 (via CARD domain); inhibits TNF-signaling pathway. Interacts with SH3RF2, TRADD and RIPK1. SH3RF2 facilitates the recruitment of RIPK1 and TRADD to TNFRSF1A in a TNF-alpha-dependent process. Interacts with PGLYRP1; this interaction is important for cell death induction. Interacts (via death domain) with MADD (via death domain).

It localises to the cell membrane. The protein resides in the golgi apparatus membrane. Receptor for TNFSF2/TNF-alpha and homotrimeric TNFSF1/lymphotoxin-alpha. The adapter molecule FADD recruits caspase-8 to the activated receptor. The resulting death-inducing signaling complex (DISC) performs caspase-8 proteolytic activation which initiates the subsequent cascade of caspases (aspartate-specific cysteine proteases) mediating apoptosis. In Bos taurus (Bovine), this protein is Tumor necrosis factor receptor superfamily member 1A (TNFRSF1A).